We begin with the raw amino-acid sequence, 555 residues long: CTP synthase (555 aa).

An amidoligase domain region spans residues 1–267 (MPKFVFVTGG…CKEVLEFLDL (267 aa)). Serine 13 contributes to the CTP binding site. Serine 13 lines the UTP pocket. ATP is bound by residues 14 to 19 (SIGKGI) and aspartate 71. Aspartate 71 and glutamate 141 together coordinate Mg(2+). Residues 148–150 (DIE), 188–193 (KTKPTQ), and lysine 224 contribute to the CTP site. UTP-binding positions include 188-193 (KTKPTQ) and lysine 224. Residues 292–534 (KVAVVGKYVQ…IAAAQSRLPR (243 aa)) enclose the Glutamine amidotransferase type-1 domain. Glycine 354 contacts L-glutamine. The Nucleophile; for glutamine hydrolysis role is filled by cysteine 381. Residues 382–385 (LGMQ), glutamate 405, and arginine 462 each bind L-glutamine. Catalysis depends on residues histidine 507 and glutamate 509. The tract at residues 532–555 (LPRSPQEALKQTQINSPNQSKNNP) is disordered. The span at 540–555 (LKQTQINSPNQSKNNP) shows a compositional bias: polar residues.

The protein belongs to the CTP synthase family. Homotetramer.

It carries out the reaction UTP + L-glutamine + ATP + H2O = CTP + L-glutamate + ADP + phosphate + 2 H(+). The catalysed reaction is L-glutamine + H2O = L-glutamate + NH4(+). The enzyme catalyses UTP + NH4(+) + ATP = CTP + ADP + phosphate + 2 H(+). The protein operates within pyrimidine metabolism; CTP biosynthesis via de novo pathway; CTP from UDP: step 2/2. With respect to regulation, allosterically activated by GTP, when glutamine is the substrate; GTP has no effect on the reaction when ammonia is the substrate. The allosteric effector GTP functions by stabilizing the protein conformation that binds the tetrahedral intermediate(s) formed during glutamine hydrolysis. Inhibited by the product CTP, via allosteric rather than competitive inhibition. Its function is as follows. Catalyzes the ATP-dependent amination of UTP to CTP with either L-glutamine or ammonia as the source of nitrogen. Regulates intracellular CTP levels through interactions with the four ribonucleotide triphosphates. This chain is CTP synthase, found in Prochlorococcus marinus (strain MIT 9211).